Reading from the N-terminus, the 180-residue chain is Shikimate kinase (180 aa).

14 to 19 (GAGKSS) serves as a coordination point for ATP. Ser-18 contacts Mg(2+). 3 residues coordinate substrate: Asp-36, Arg-60, and Gly-82. Arg-120 provides a ligand contact to ATP. Arg-139 is a binding site for substrate.

It belongs to the shikimate kinase family. As to quaternary structure, monomer. It depends on Mg(2+) as a cofactor.

It is found in the cytoplasm. It carries out the reaction shikimate + ATP = 3-phosphoshikimate + ADP + H(+). Its pathway is metabolic intermediate biosynthesis; chorismate biosynthesis; chorismate from D-erythrose 4-phosphate and phosphoenolpyruvate: step 5/7. Catalyzes the specific phosphorylation of the 3-hydroxyl group of shikimic acid using ATP as a cosubstrate. The chain is Shikimate kinase from Xylella fastidiosa (strain M12).